Consider the following 407-residue polypeptide: MKRAFIMVLDSFGIGSSKDAEKFGDKGSDTLGHIAEACFRGEADKGRKGPLHLPNLTALGLGKAAEASSGKFPPGLDKNAEIIGAYAYASELSSGKDTPSGHWEIAGVPVLFDWGYFSDTENSFPQELLDLLVEKANLPGYLGNCHSSGTVILDQLGAEHMKSGKPIFYTSADSVFQIACHEETFGLERLYALCEIAREALTEGGYNIGRVIARPFVGDKPGHFERTGNRHDLAVEPPAPTVLKKLVDEQGGEVISVGKIADIYAHVGITKKVKATGLDALFDATVGEMKSAPDNSIVFTNFVDFDSAWGHRRDIPGYAAGLELFDRRLPELMALVKEGDILILTADHGCDPSWPGTEHTREHIPVLIFGPGVRPGDYGYRDTFADIGQTLAHYFGLSPMAYGKPFF.

Mn(2+)-binding residues include aspartate 10, aspartate 306, histidine 311, aspartate 347, histidine 348, and histidine 359.

This sequence belongs to the phosphopentomutase family. Mn(2+) serves as cofactor.

The protein localises to the cytoplasm. It catalyses the reaction 2-deoxy-alpha-D-ribose 1-phosphate = 2-deoxy-D-ribose 5-phosphate. It carries out the reaction alpha-D-ribose 1-phosphate = D-ribose 5-phosphate. Its pathway is carbohydrate degradation; 2-deoxy-D-ribose 1-phosphate degradation; D-glyceraldehyde 3-phosphate and acetaldehyde from 2-deoxy-alpha-D-ribose 1-phosphate: step 1/2. Isomerase that catalyzes the conversion of deoxy-ribose 1-phosphate (dRib-1-P) and ribose 1-phosphate (Rib-1-P) to deoxy-ribose 5-phosphate (dRib-5-P) and ribose 5-phosphate (Rib-5-P), respectively. This Erwinia tasmaniensis (strain DSM 17950 / CFBP 7177 / CIP 109463 / NCPPB 4357 / Et1/99) protein is Phosphopentomutase.